The following is a 178-amino-acid chain: Large ribosomal subunit protein uL5 (178 aa).

The protein belongs to the universal ribosomal protein uL5 family. In terms of assembly, part of the 50S ribosomal subunit; part of the 5S rRNA/L5/L18/L25 subcomplex. Contacts the 5S rRNA and the P site tRNA. Forms a bridge to the 30S subunit in the 70S ribosome.

Its function is as follows. This is one of the proteins that bind and probably mediate the attachment of the 5S RNA into the large ribosomal subunit, where it forms part of the central protuberance. In the 70S ribosome it contacts protein S13 of the 30S subunit (bridge B1b), connecting the 2 subunits; this bridge is implicated in subunit movement. Contacts the P site tRNA; the 5S rRNA and some of its associated proteins might help stabilize positioning of ribosome-bound tRNAs. This Acinetobacter baumannii (strain AB0057) protein is Large ribosomal subunit protein uL5.